A 185-amino-acid polypeptide reads, in one-letter code: Protein-arginine kinase activator protein (185 aa).

Arg115 and Arg169 each carry phosphoarginine. One can recognise a UVR domain in the interval 139-174 (RRQIDMLKKELESLIHQEEFENAAHVRDQIRLLEQS).

In terms of assembly, interacts with McsB. Phosphorylated on Arg residues by McsB.

In terms of biological role, activates the phosphorylation activity of the protein-arginine kinase McsB. Is required for the delocalization of competence proteins from the cell poles. The sequence is that of Protein-arginine kinase activator protein (mcsA) from Bacillus subtilis (strain 168).